Consider the following 166-residue polypeptide: Telethonin (166 aa).

Serine 39 carries the phosphoserine modification. Positions 145–166 (VSKPGTLRRSLSRSMSQEAQRG) are disordered. Residues 156–166 (SRSMSQEAQRG) show a composition bias toward polar residues.

As to quaternary structure, interacts with MYOZ1, MYOZ2 and MYOZ3. Interacts with CSRP3. Interacts directly with the N-terminal Ig-like domains of 2 titin (TTN) molecules. Interacts with ANKRD2; the interaction is direct.

It is found in the cytoplasm. Its subcellular location is the myofibril. The protein resides in the sarcomere. In terms of biological role, muscle assembly regulating factor. Mediates the antiparallel assembly of titin (TTN) molecules at the sarcomeric Z-disk. This chain is Telethonin (TCAP), found in Bos taurus (Bovine).